The chain runs to 195 residues: Cysteine/O-acetylserine efflux protein (195 aa).

The Periplasmic segment spans residues 1–9 (MTPILLSAF). A helical membrane pass occupies residues 10–32 (WTYTLITAMTPGPNNILALSSAT). Residues 33–46 (SHGFRQSTRVLAGM) are Cytoplasmic-facing. The chain crosses the membrane as a helical span at residues 47-67 (SLGFLIVMLLCAGISFSLAVI). Over 68 to 69 (DP) the chain is Periplasmic. Residues 70–90 (AAVHLLSWAGAAYIVWLAWKI) traverse the membrane as a helical segment. Topologically, residues 91-104 (ATSPTKEDGLQAKP) are cytoplasmic. A helical transmembrane segment spans residues 105–125 (ISFWASFALQFVNVKIILYGV). Residues 126–141 (TALSTFVLPQTQALSW) lie on the Periplasmic side of the membrane. Residues 142–162 (VVGVSVLLAMIGTFGNVCWAL) traverse the membrane as a helical segment. At 163-176 (AGHLFQRLFRQYGR) the chain is on the cytoplasmic side. A helical transmembrane segment spans residues 177-194 (QLNIVLALLLVYCAVRIF). Residue tyrosine 195 is a topological domain, periplasmic.

It belongs to the Rht family.

The protein localises to the cell inner membrane. It carries out the reaction O-acetyl-L-serine(in) = O-acetyl-L-serine(out). The catalysed reaction is L-cysteine(in) = L-cysteine(out). In terms of biological role, exporter of O-acetylserine (OAS) and cysteine. The polypeptide is Cysteine/O-acetylserine efflux protein (eamB) (Shigella flexneri serotype 5b (strain 8401)).